Consider the following 582-residue polypeptide: BTB/POZ domain and ankyrin repeat-containing protein NPR1 (582 aa).

A compositionally biased stretch (polar residues) spans 1-12 (MEPPTSHVTNAF). The tract at residues 1-27 (MEPPTSHVTNAFSDSDSASVEEGDADA) is disordered. The BTB domain maps to 55–140 (ADARIAVPGG…VLDYLYSGRV (86 aa)). Residues 147 to 161 (ACLCVDEDCAHVGCH) form a C2HC NPR-type zinc finger. Residues Cys150, Cys155, His157, and Cys160 each coordinate Zn(2+). ANK repeat units lie at residues 229–258 (RSNLDMITLEKSLPPDVIKQIIDARLSLGL), 269–299 (KHVRRIHRALDSDDVELVRMLLTEGQTNLDD), 301–328 (FALHYAVEHCDSKITTELLDLALADVNH), and 332–361 (RGYTVLHIAARRREPKIIVSLLTKGARPAD). The tract at residues 391–526 (PSPKDRLCIE…VLDKIMDDET (136 aa)) is salicylic acid-binding core (SBC). A salicylate-binding site is contributed by Arg436. Disordered regions lie at residues 525–544 (ETDPVSLGRDTSAEKRKRFH) and 551–582 (QKAFHEDKEENDRSGLSSSSSSTSIGAIRPRR). A compositionally biased stretch (basic and acidic residues) spans 553–563 (AFHEDKEENDR). Residues 564-574 (SGLSSSSSSTS) show a composition bias toward low complexity.

This sequence belongs to the plant 'ANKYRIN-BTB/POZ' family. 'NPR1-like' subfamily. Oligomer in an uninduced state; disulfide-linked. Forms activated monomer upon changes in cellular redox potential. Interacts with TGA2.2. Interacts with NRR.

The protein resides in the cytoplasm. Its subcellular location is the nucleus. It localises to the nuclear body. It functions in the pathway protein modification; protein ubiquitination. Its function is as follows. Salicylic acid (SA)-binding substrate-specific adapter of an E3 ubiquitin-protein ligase complex (CUL3-RBX1-BTB) which mediates the ubiquitination and subsequent proteasomal degradation of target proteins. Transcription cofactor that represses gene expression in the absence of salicylic acid (SA), when attached to negative cis-elements (W-box) with WRKY transcription factors, but stimulates gene expression upon activation by SA, when sumoylated and attached to positive cis-elements (as-1) with TGA transcription factors, thus confering immunity through a series of gene regulations ending in a significant increase in antimicrobial and defense genes expression. Key positive factor of disease resistance. Involved in defense response against the bacterial blight disease caused by Xanthomonas oryzae pv. oryzae (Xoo). Plants over-expressing NPR1/NH1 acquire high levels of resistance to Xoo, express constitutively defense genes and develop lesion-mimic spots on leaves at pre-flowering stage. Involved in basal resistance to the blast pathogen Magnaporthe oryzae. Plants over-expressing NPR1/NH1 have increased resistance to M.oryzae infection. Plays an essential role in benzothiadiazole (BTH)-induced resistance to the blast fungus disease caused by Magnaporthe oryzae. Functions as a transcriptional coactivator of TGA2.1 and LG2 in vitro. Involved in defense response against herbivore. Plants silencing NPR1/NH1 have increased herbivore-induced trypsin proteinase inhibitors and volatiles, which reduces the performance of the striped stem borer (SSB) Chilo suppressalis. In Oryza sativa subsp. indica (Rice), this protein is BTB/POZ domain and ankyrin repeat-containing protein NPR1.